The following is a 452-amino-acid chain: Trigger factor (452 aa).

Residues 169–254 form the PPIase FKBP-type domain; that stretch reads GDQLLIDFVG…VQEVRAPVDG (86 aa).

It belongs to the FKBP-type PPIase family. Tig subfamily.

It is found in the cytoplasm. It carries out the reaction [protein]-peptidylproline (omega=180) = [protein]-peptidylproline (omega=0). Functionally, involved in protein export. Acts as a chaperone by maintaining the newly synthesized protein in an open conformation. Functions as a peptidyl-prolyl cis-trans isomerase. In Caulobacter vibrioides (strain ATCC 19089 / CIP 103742 / CB 15) (Caulobacter crescentus), this protein is Trigger factor (tig).